The primary structure comprises 404 residues: L-cysteine:1D-myo-inositol 2-amino-2-deoxy-alpha-D-glucopyranoside ligase (404 aa).

Cys47 lines the Zn(2+) pocket. L-cysteinyl-5'-AMP is bound by residues 47–50 (CGIT), Thr62, and 85–87 (NIT). A 'HIGH' region motif is present at residues 49–59 (ITPYDSTHLGH). The short motif at 188 to 193 (ERGGDP) is the 'ERGGDP' region element. Trp228 serves as a coordination point for L-cysteinyl-5'-AMP. Cys232 lines the Zn(2+) pocket. 250–252 (GSD) contacts L-cysteinyl-5'-AMP. His257 provides a ligand contact to Zn(2+). Ile284 contributes to the L-cysteinyl-5'-AMP binding site. A 'KMSKS' region motif is present at residues 290 to 294 (KMSKS).

This sequence belongs to the class-I aminoacyl-tRNA synthetase family. MshC subfamily. As to quaternary structure, monomer. The cofactor is Zn(2+).

The catalysed reaction is 1D-myo-inositol 2-amino-2-deoxy-alpha-D-glucopyranoside + L-cysteine + ATP = 1D-myo-inositol 2-(L-cysteinylamino)-2-deoxy-alpha-D-glucopyranoside + AMP + diphosphate + H(+). Functionally, catalyzes the ATP-dependent condensation of GlcN-Ins and L-cysteine to form L-Cys-GlcN-Ins. In Corynebacterium striatum, this protein is L-cysteine:1D-myo-inositol 2-amino-2-deoxy-alpha-D-glucopyranoside ligase.